Here is a 458-residue protein sequence, read N- to C-terminus: MRADRPGHRSRGINPGPGMFTLVGPDERDDPEVAVDPIRRVAMISLHTSPLDQPGTGDAGGMNVYVIELSKRLAAQGIAVDIFTRATTSAVEPLVEAYDGVQVRHIHAGPFEGLTKAELPGQLCVFAREVLRAEAAQPVGHYDVVHSHYWLSGQVGALARDRWGVPLVHSMHTMAKVKNDALAEGDTPEPAARIIGEEQVVEAADMLVANTDIEAKQLVNMYDADPSRVEVVHPGVDLGVFRPQDRSTARARLGLPEDAAVLLFAGRIQPLKAPDVLLRAVAELLAQTPELRSRLVVPIVGGPSGSGLEHPESLAQLASELGLDGAGGTGPVVRFVPPVSQEELARWCAAATLVAVPSYNESFGLVAAEAQATGTPVVAAAVGGLTTVVRDGRSGLLVDTHDPRDWADALRRVVENDAFRDRLAAGALEQARLFSWEHTARQTLDVYRRARAEIREAV.

The interval Met-1–Asp-29 is disordered. Position 47 (His-47) interacts with 1D-myo-inositol 3-phosphate. Residues Gln-53–Pro-54 and Gly-61 each bind UDP-N-acetyl-alpha-D-glucosamine. Residues Asp-58 to Asn-63, Lys-116, Tyr-149, Thr-173, and Arg-193 each bind 1D-myo-inositol 3-phosphate. Positions 267, 272, and 339 each coordinate UDP-N-acetyl-alpha-D-glucosamine. Residue Ala-351 participates in Mg(2+) binding. Residues Glu-361 and Glu-369 each coordinate UDP-N-acetyl-alpha-D-glucosamine. Residue Thr-375 coordinates Mg(2+).

It belongs to the glycosyltransferase group 1 family. MshA subfamily. As to quaternary structure, homodimer.

The enzyme catalyses 1D-myo-inositol 3-phosphate + UDP-N-acetyl-alpha-D-glucosamine = 1D-myo-inositol 2-acetamido-2-deoxy-alpha-D-glucopyranoside 3-phosphate + UDP + H(+). Catalyzes the transfer of a N-acetyl-glucosamine moiety to 1D-myo-inositol 3-phosphate to produce 1D-myo-inositol 2-acetamido-2-deoxy-glucopyranoside 3-phosphate in the mycothiol biosynthesis pathway. The sequence is that of D-inositol 3-phosphate glycosyltransferase from Nocardioides sp. (strain ATCC BAA-499 / JS614).